Consider the following 156-residue polypeptide: ATP synthase subunit b (156 aa).

A helical transmembrane segment spans residues 12–32; it reads VAFFIFVIFCMKFVWPPVIAA.

The protein belongs to the ATPase B chain family. As to quaternary structure, F-type ATPases have 2 components, F(1) - the catalytic core - and F(0) - the membrane proton channel. F(1) has five subunits: alpha(3), beta(3), gamma(1), delta(1), epsilon(1). F(0) has three main subunits: a(1), b(2) and c(10-14). The alpha and beta chains form an alternating ring which encloses part of the gamma chain. F(1) is attached to F(0) by a central stalk formed by the gamma and epsilon chains, while a peripheral stalk is formed by the delta and b chains.

Its subcellular location is the cell inner membrane. Functionally, f(1)F(0) ATP synthase produces ATP from ADP in the presence of a proton or sodium gradient. F-type ATPases consist of two structural domains, F(1) containing the extramembraneous catalytic core and F(0) containing the membrane proton channel, linked together by a central stalk and a peripheral stalk. During catalysis, ATP synthesis in the catalytic domain of F(1) is coupled via a rotary mechanism of the central stalk subunits to proton translocation. Component of the F(0) channel, it forms part of the peripheral stalk, linking F(1) to F(0). This is ATP synthase subunit b from Pseudomonas savastanoi pv. phaseolicola (strain 1448A / Race 6) (Pseudomonas syringae pv. phaseolicola (strain 1448A / Race 6)).